Reading from the N-terminus, the 238-residue chain is Nicotinamide/nicotinic acid mononucleotide adenylyltransferase (238 aa).

NAD(+)-binding residues include Ser29 and Phe30. The ATP site is built by His37 and Lys70. NAD(+) contacts are provided by Thr107, Gly136, Asp138, Trp149, Arg168, and Asn199. 204 to 205 (SR) provides a ligand contact to ATP.

This sequence belongs to the eukaryotic NMN adenylyltransferase family. Requires a divalent metal cation as cofactor.

It is found in the nucleus. It carries out the reaction beta-nicotinamide D-ribonucleotide + ATP + H(+) = diphosphate + NAD(+). The catalysed reaction is nicotinate beta-D-ribonucleotide + ATP + H(+) = deamido-NAD(+) + diphosphate. Its pathway is cofactor biosynthesis; NAD(+) biosynthesis; deamido-NAD(+) from nicotinate D-ribonucleotide: step 1/1. It participates in cofactor biosynthesis; NAD(+) biosynthesis; NAD(+) from nicotinamide D-ribonucleotide: step 1/1. Its function is as follows. Catalyzes the formation of NAD(+) from nicotinamide mononucleotide (NMN) and ATP. Can also use the deamidated form; nicotinic acid mononucleotide (NaMN) as substrate. In Arabidopsis thaliana (Mouse-ear cress), this protein is Nicotinamide/nicotinic acid mononucleotide adenylyltransferase (NMNAT).